We begin with the raw amino-acid sequence, 318 residues long: Glutathione synthetase (318 aa).

The 185-residue stretch at 133 to 317 (KMYALQFTSV…LGQQVMAWLF (185 aa)) folds into the ATP-grasp domain. Residue 159–215 (VQQQGMAVLKPLGGKGGEGILFLQAGDRNLNSMIEISTQRGQLPVMLQEYLPAAKEG) coordinates ATP. Mg(2+) is bound by residues E288 and N290.

The protein belongs to the prokaryotic GSH synthase family. Mg(2+) serves as cofactor. Mn(2+) is required as a cofactor.

It carries out the reaction gamma-L-glutamyl-L-cysteine + glycine + ATP = glutathione + ADP + phosphate + H(+). The protein operates within sulfur metabolism; glutathione biosynthesis; glutathione from L-cysteine and L-glutamate: step 2/2. In Thermosynechococcus vestitus (strain NIES-2133 / IAM M-273 / BP-1), this protein is Glutathione synthetase.